The following is a 61-amino-acid chain: Insect toxin AaHIT5 (61 aa).

The 61-residue stretch at 1 to 61 (DGYIKRHDGC…AWKSETNTCD (61 aa)) folds into the LCN-type CS-alpha/beta domain. Disulfide bonds link cysteine 10–cysteine 60, cysteine 14–cysteine 35, cysteine 21–cysteine 42, and cysteine 25–cysteine 44.

In terms of tissue distribution, expressed by the venom gland.

The protein localises to the secreted. Functionally, excitatory insect toxins induce a spastic paralysis. They bind voltage-independently to sodium channels (Nav) and shift the voltage of activation toward more negative potentials thereby affecting sodium channel activation and promoting spontaneous and repetitive firing. This toxin elicits excitatory activity with no flaccid paralysis despite its high degree of sequence similarity with other depressant insect toxins. This toxin is active only on insects. This is Insect toxin AaHIT5 from Androctonus australis (Sahara scorpion).